The sequence spans 359 residues: Chorismate synthase (359 aa).

NADP(+) is bound at residue R47. FMN contacts are provided by residues 123–125 (RSS), G283, 298–302 (KPTSS), and R326.

Belongs to the chorismate synthase family. In terms of assembly, homotetramer. FMNH2 is required as a cofactor.

It carries out the reaction 5-O-(1-carboxyvinyl)-3-phosphoshikimate = chorismate + phosphate. Its pathway is metabolic intermediate biosynthesis; chorismate biosynthesis; chorismate from D-erythrose 4-phosphate and phosphoenolpyruvate: step 7/7. Catalyzes the anti-1,4-elimination of the C-3 phosphate and the C-6 proR hydrogen from 5-enolpyruvylshikimate-3-phosphate (EPSP) to yield chorismate, which is the branch point compound that serves as the starting substrate for the three terminal pathways of aromatic amino acid biosynthesis. This reaction introduces a second double bond into the aromatic ring system. The polypeptide is Chorismate synthase (Chlamydia caviae (strain ATCC VR-813 / DSM 19441 / 03DC25 / GPIC) (Chlamydophila caviae)).